Reading from the N-terminus, the 209-residue chain is Glycerol-3-phosphate acyltransferase (209 aa).

A run of 5 helical transmembrane segments spans residues 13 to 33 (ALIA…GLLL), 63 to 83 (LAAA…LIAQ), 94 to 114 (PGLL…WLGF), 127 to 147 (LLGI…SIAF), and 151 to 171 (YSSL…WILG).

The protein belongs to the PlsY family. Probably interacts with PlsX.

It localises to the cell inner membrane. The enzyme catalyses an acyl phosphate + sn-glycerol 3-phosphate = a 1-acyl-sn-glycero-3-phosphate + phosphate. Its pathway is lipid metabolism; phospholipid metabolism. In terms of biological role, catalyzes the transfer of an acyl group from acyl-phosphate (acyl-PO(4)) to glycerol-3-phosphate (G3P) to form lysophosphatidic acid (LPA). This enzyme utilizes acyl-phosphate as fatty acyl donor, but not acyl-CoA or acyl-ACP. The polypeptide is Glycerol-3-phosphate acyltransferase (Allorhizobium ampelinum (strain ATCC BAA-846 / DSM 112012 / S4) (Agrobacterium vitis (strain S4))).